Reading from the N-terminus, the 229-residue chain is Large ribosomal subunit protein uL1 (229 aa).

The protein belongs to the universal ribosomal protein uL1 family. As to quaternary structure, part of the 50S ribosomal subunit.

Its function is as follows. Binds directly to 23S rRNA. The L1 stalk is quite mobile in the ribosome, and is involved in E site tRNA release. Protein L1 is also a translational repressor protein, it controls the translation of the L11 operon by binding to its mRNA. The chain is Large ribosomal subunit protein uL1 from Pediococcus pentosaceus (strain ATCC 25745 / CCUG 21536 / LMG 10740 / 183-1w).